We begin with the raw amino-acid sequence, 106 residues long: UPF0145 protein TM_0763 (106 aa).

This sequence belongs to the UPF0145 family.

This is UPF0145 protein TM_0763 from Thermotoga maritima (strain ATCC 43589 / DSM 3109 / JCM 10099 / NBRC 100826 / MSB8).